A 693-amino-acid polypeptide reads, in one-letter code: Adhesion G-protein coupled receptor G1 (693 aa).

The N-terminal stretch at 1-25 is a signal peptide; sequence MTPQSLLQTTLFLLSLLFLVQGAHG. 26-33 provides a ligand contact to heparin; the sequence is RGHREDFR. Topologically, residues 26–401 are extracellular; sequence RGHREDFRFC…SVEVDAVHKH (376 aa). Cystine bridges form between Cys35-Cys91 and Cys121-Cys177. Residues Asn39, Asn148, and Asn171 are each glycosylated (N-linked (GlcNAc...) asparagine). 190 to 200 serves as a coordination point for heparin; the sequence is LKHPQKASRRP. The 172-residue stretch at 224-395 folds into the GAIN-B domain; the sequence is DMVSFEEDRI…AVLMVSSVEV (172 aa). Asn234, Asn303, Asn324, and Asn341 each carry an N-linked (GlcNAc...) asparagine glycan. Cystine bridges form between Cys346–Cys377 and Cys366–Cys379. The tract at residues 346–395 is GPS; sequence CVFWVEDPTLSSPGHWSSAGCETVRRETQTSCFCNHLTYFAVLMVSSVEV. Residues 384 to 397 are stachel; it reads YFAVLMVSSVEVDA. Residues 402-424 traverse the membrane as a helical segment; it reads YLSLLSYVGCVVSALACLVTIAA. The Cytoplasmic portion of the chain corresponds to 425–437; it reads YLCSRVPLPCRRK. A helical transmembrane segment spans residues 438 to 460; sequence PRDYTIKVHMNLLLAVFLLDTSF. Residues 461 to 465 are Extracellular-facing; sequence LLSEP. The chain crosses the membrane as a helical span at residues 466–495; that stretch reads VALTGSEAGCRASAIFLHFSLLTCLSWMGL. The cysteines at positions 475 and 562 are disulfide-linked. Over 496–510 the chain is Cytoplasmic; sequence EGYNLYRLVVEVFGT. The chain crosses the membrane as a helical span at residues 511–533; sequence YVPGYLLKLSAMGWGFPIFLVTL. Residues 534–562 lie on the Extracellular side of the membrane; it reads VALVDVDNYGPIILAVHRTPEGVIYPSMC. The chain crosses the membrane as a helical span at residues 563 to 588; sequence WIRDSLVSYITNLGLFSLVFLFNMAM. Residues 589–602 are Cytoplasmic-facing; it reads LATMVVQILRLRPH. The chain crosses the membrane as a helical span at residues 603-624; sequence TQKWSHVLTLLGLSLVLGLPWA. Residues 625 to 628 lie on the Extracellular side of the membrane; it reads LIFF. A helical transmembrane segment spans residues 629–654; sequence SFASGTFQLVVLYLFSIITSFQGFLI. The Cytoplasmic segment spans residues 655 to 693; sequence FIWYWSMRLQARGGPSPLKSNSDSARLPISSGSTSSSRI. Residues 670-693 are disordered; that stretch reads SPLKSNSDSARLPISSGSTSSSRI. Positions 684–693 are enriched in low complexity; the sequence is SSGSTSSSRI.

The protein belongs to the G-protein coupled receptor 2 family. LN-TM7 subfamily. In terms of assembly, heterodimer of 2 chains generated by proteolytic processing; the large extracellular N-terminal fragment (ADGRG1 NT) and the membrane-bound C-terminal fragment (ADGRG1-CT) predominantly remain associated and non-covalently linked. ADGRG1 NT self-associates in a trans-trans manner; the homophilic interaction enhances receptor signaling. Interacts with TGM2. Interacts with heparin; leading to the reduction of ADGRG1 shedding. Interacts with COL3A1. Part of a GPCR-tetraspanin complex at least consisting of ADGRG1, CD81, eventually CD9, and GNA11 in which CD81 is enhancing the association of ADGRG1 with GNA11. Autoproteolytically cleaved into 2 fragments; the large extracellular N-terminal fragment (ADGRG1 NT) and the membrane-bound C-terminal fragment (ADGRG1 CT) predominantly remain associated and non-covalently linked. Shedding to yield the secreted ADGRG1 N-terminal fragment seems to involve metalloprotease(s). In terms of processing, N-glycosylated. Contains sialic acid residues. Post-translationally, ubiquitinated. Undergoes polyubiquitination upon activation. In terms of tissue distribution, widely distributed with highest levels found in thyroid gland, brain and heart. Expressed in a great number of tumor cells. Expression is down-regulated in different tumors from highly metastatic cells.

Its subcellular location is the cell membrane. The protein resides in the secreted. It is found in the membrane raft. Forms a heterodimer of 2 chains generated by proteolytic processing that remain associated through non-covalent interactions mediated by the GAIN-B domain. In the inactivated receptor, the Stachel sequence (also named stalk) is embedded in the GAIN-B domain, where it adopts a beta-strand conformation. On activation, the Stachel moves into the 7 transmembrane region and adopts a twisted hook-shaped configuration that forms contacts within the receptor, leading to coupling of a G-alpha protein, which activates signaling. The cleaved GAIN-B and N-terminal domains can then dissociate from the rest of the receptor. Adhesion G-protein coupled receptor (aGPCR) for steroid hormone 17alpha-hydroxypregnenolone (17-OH), which is involved in cell adhesion and cell-cell interactions. Ligand binding causes a conformation change that triggers signaling via guanine nucleotide-binding proteins (G proteins) and modulates the activity of downstream effectors, such as RhoA pathway. ADGRG1 is coupled to G(12) and/or G(13) G proteins (GNA12 and GNA13, respectively) and mediates the activation Rho small GTPases. Acts as a potent suppressor of ferroptosis: binding to 17-OH-binding initiates signaling that down-regulates CD36 and alleviates ferroptosis-induced liver injury. Ligand-binding also induces cell adhesion activity via association with proteins such as collagen III/COL3A1 and TGM2. Mediates cell matrix adhesion in developing neurons and hematopoietic stem cells. Involved in cortical development, specifically in maintenance of the pial basement membrane integrity and in cortical lamination: association with COL3A1 in the developing brain inhibits neuronal migration via activation of the RhoA pathway. Together with TGM2, acts as a regulator of myelination and myelin repair in oligodendrocyte precursor cells. Acts as a hemostatic sensor of shear force: G protein-coupled receptor signaling is activated in response to shear force in platelets, promoting G(13) G protein signaling, and platelet shape change and aggregation in a COL3A1-dependent manner. Acts as an inhibitor of VEGFA production thereby inhibiting angiogenesis through a signaling pathway mediated by PRKCA. Plays a role in the maintenance of hematopoietic stem cells in bone marrow niche. Plays an essential role in testis development. The sequence is that of Adhesion G-protein coupled receptor G1 from Homo sapiens (Human).